Consider the following 207-residue polypeptide: Guanylate kinase (207 aa).

Residues 3 to 181 (GLLFVVSAAS…ALHDLESVIT (179 aa)) form the Guanylate kinase-like domain. Residue 10–17 (AASGTGKT) coordinates ATP.

This sequence belongs to the guanylate kinase family.

It is found in the cytoplasm. It carries out the reaction GMP + ATP = GDP + ADP. Its function is as follows. Essential for recycling GMP and indirectly, cGMP. This Acinetobacter baylyi (strain ATCC 33305 / BD413 / ADP1) protein is Guanylate kinase.